The primary structure comprises 348 residues: Phosphoribosylformylglycinamidine cyclo-ligase (348 aa).

Belongs to the AIR synthase family.

It is found in the cytoplasm. The enzyme catalyses 2-formamido-N(1)-(5-O-phospho-beta-D-ribosyl)acetamidine + ATP = 5-amino-1-(5-phospho-beta-D-ribosyl)imidazole + ADP + phosphate + H(+). It functions in the pathway purine metabolism; IMP biosynthesis via de novo pathway; 5-amino-1-(5-phospho-D-ribosyl)imidazole from N(2)-formyl-N(1)-(5-phospho-D-ribosyl)glycinamide: step 2/2. The chain is Phosphoribosylformylglycinamidine cyclo-ligase from Sorangium cellulosum (strain So ce56) (Polyangium cellulosum (strain So ce56)).